A 272-amino-acid chain; its full sequence is tRNA pseudouridine synthase B (272 aa).

Residue Asp38 is the Nucleophile of the active site.

The protein belongs to the pseudouridine synthase TruB family. Type 1 subfamily.

It catalyses the reaction uridine(55) in tRNA = pseudouridine(55) in tRNA. Functionally, responsible for synthesis of pseudouridine from uracil-55 in the psi GC loop of transfer RNAs. This is tRNA pseudouridine synthase B from Campylobacter jejuni (strain RM1221).